We begin with the raw amino-acid sequence, 229 residues long: Potassium/proton antiporter CemA (229 aa).

The next 4 membrane-spanning stretches (helical) occupy residues 7-27 (FTPLLYLASIVFLPWWISLSF), 114-134 (LICFVILSGYSILGNEELLIL), 154-174 (ILLLTDLCIGFHSPHGWELMI), and 189-209 (IISGLVSTFPVILDTIFKYWI).

It belongs to the CemA family.

The protein localises to the plastid. Its subcellular location is the chloroplast inner membrane. It carries out the reaction K(+)(in) + H(+)(out) = K(+)(out) + H(+)(in). Functionally, contributes to K(+)/H(+) antiport activity by supporting proton efflux to control proton extrusion and homeostasis in chloroplasts in a light-dependent manner to modulate photosynthesis. Prevents excessive induction of non-photochemical quenching (NPQ) under continuous-light conditions. Indirectly promotes efficient inorganic carbon uptake into chloroplasts. This Gossypium barbadense (Sea Island cotton) protein is Potassium/proton antiporter CemA.